We begin with the raw amino-acid sequence, 280 residues long: Probable cell division protein WhiA (280 aa).

A DNA-binding region (H-T-H motif) is located at residues 246–279 (SLEQIAQFFERKYKVQITRSGIQHLNAKLKKLNQ).

This sequence belongs to the WhiA family.

Its function is as follows. Involved in cell division and chromosome segregation. The protein is Probable cell division protein WhiA of Mycoplasma pneumoniae (strain ATCC 29342 / M129 / Subtype 1) (Mycoplasmoides pneumoniae).